The primary structure comprises 314 residues: MAANINNAAAWLTEAKAHPFQVKEAPSYTPEENEILVKNHAVAINPVDGSLQSKAWWPMNYPTILGQDVAGEVVQVGPNVARFQPGDRVVGHAVGMATKRLQDNAFQAYTILQTNMASQLPSEISYEDAAVLPLGLSTAASGLFQDDVGSNAIQLGVAAGYEVFTTASPKNFDYVKELGASQVFDYHSATVAQDLVAALQGKTVAGAMDCIGFAATPLTVEVVSKSQGVKFVSTVKGGFQAPEGVTVKSVFGTTIKDNQVGKAIYEDYLPKALKAGSFIPAPVALVAGKGLESVQAAVDLQAQGTSAQKVVVSL.

Belongs to the zinc-containing alcohol dehydrogenase family.

Functionally, involved in osmoadaptation. The chain is Zinc-binding alcohol dehydrogenase domain-containing protein cipB (cipB) from Emericella nidulans (strain FGSC A4 / ATCC 38163 / CBS 112.46 / NRRL 194 / M139) (Aspergillus nidulans).